Here is a 189-residue protein sequence, read N- to C-terminus: Potassium-transporting ATPase KdpC subunit (189 aa).

A helical transmembrane segment spans residues 6–26 (PAILLFIMFTIICGGIYPALV).

The protein belongs to the KdpC family. As to quaternary structure, the system is composed of three essential subunits: KdpA, KdpB and KdpC.

Its subcellular location is the cell inner membrane. Its function is as follows. Part of the high-affinity ATP-driven potassium transport (or Kdp) system, which catalyzes the hydrolysis of ATP coupled with the electrogenic transport of potassium into the cytoplasm. This subunit acts as a catalytic chaperone that increases the ATP-binding affinity of the ATP-hydrolyzing subunit KdpB by the formation of a transient KdpB/KdpC/ATP ternary complex. The polypeptide is Potassium-transporting ATPase KdpC subunit (Trichlorobacter lovleyi (strain ATCC BAA-1151 / DSM 17278 / SZ) (Geobacter lovleyi)).